We begin with the raw amino-acid sequence, 133 residues long: Aspartate 1-decarboxylase (133 aa).

Serine 26 serves as the catalytic Schiff-base intermediate with substrate; via pyruvic acid. Serine 26 carries the post-translational modification Pyruvic acid (Ser). Substrate is bound at residue threonine 58. Catalysis depends on tyrosine 59, which acts as the Proton donor. Residue 74 to 76 (GAA) participates in substrate binding.

The protein belongs to the PanD family. As to quaternary structure, heterooctamer of four alpha and four beta subunits. Pyruvate serves as cofactor. Post-translationally, is synthesized initially as an inactive proenzyme, which is activated by self-cleavage at a specific serine bond to produce a beta-subunit with a hydroxyl group at its C-terminus and an alpha-subunit with a pyruvoyl group at its N-terminus.

It is found in the cytoplasm. It carries out the reaction L-aspartate + H(+) = beta-alanine + CO2. It functions in the pathway cofactor biosynthesis; (R)-pantothenate biosynthesis; beta-alanine from L-aspartate: step 1/1. Its function is as follows. Catalyzes the pyruvoyl-dependent decarboxylation of aspartate to produce beta-alanine. This chain is Aspartate 1-decarboxylase, found in Legionella pneumophila (strain Paris).